Here is a 227-residue protein sequence, read N- to C-terminus: Ribonuclease HII (227 aa).

Residues 1–210 (MKLAGIDEAG…LKKIEEKLAK (210 aa)) form the RNase H type-2 domain. A divalent metal cation is bound by residues aspartate 7, glutamate 8, and aspartate 105.

It belongs to the RNase HII family. Mn(2+) serves as cofactor. Mg(2+) is required as a cofactor.

The protein resides in the cytoplasm. It carries out the reaction Endonucleolytic cleavage to 5'-phosphomonoester.. Its function is as follows. Endonuclease that specifically degrades the RNA of RNA-DNA hybrids. This chain is Ribonuclease HII, found in Thermococcus onnurineus (strain NA1).